The following is a 97-amino-acid chain: Large ribosomal subunit protein uL23 (97 aa).

It belongs to the universal ribosomal protein uL23 family. Part of the 50S ribosomal subunit. Contacts protein L29, and trigger factor when it is bound to the ribosome.

Functionally, one of the early assembly proteins it binds 23S rRNA. One of the proteins that surrounds the polypeptide exit tunnel on the outside of the ribosome. Forms the main docking site for trigger factor binding to the ribosome. The protein is Large ribosomal subunit protein uL23 of Clostridium botulinum (strain ATCC 19397 / Type A).